A 218-amino-acid chain; its full sequence is Cell division protein SepF (218 aa).

Positions 25–115 (DVAASTDNVI…IANRREQYQQ (91 aa)) are disordered. Positions 29 to 43 (STDNVIPRSQQSVRA) are enriched in polar residues. Residues 47–63 (PKQEPRNNHVQQDHQAR) show a composition bias toward basic and acidic residues.

It belongs to the SepF family. In terms of assembly, homodimer. Interacts with FtsZ.

Its subcellular location is the cytoplasm. Cell division protein that is part of the divisome complex and is recruited early to the Z-ring. Probably stimulates Z-ring formation, perhaps through the cross-linking of FtsZ protofilaments. Its function overlaps with FtsA. The chain is Cell division protein SepF from Streptococcus pyogenes serotype M12 (strain MGAS2096).